The chain runs to 642 residues: Threonine--tRNA ligase (642 aa).

The region spanning 1 to 63 (MSTVTVTLPD…TADVELEIVT (63 aa)) is the TGS domain. The tract at residues 242–533 (DHRKIGQEMD…LTEHYNGKFP (292 aa)) is catalytic. Positions 334, 385, and 510 each coordinate Zn(2+).

It belongs to the class-II aminoacyl-tRNA synthetase family. As to quaternary structure, homodimer. Zn(2+) is required as a cofactor.

Its subcellular location is the cytoplasm. It carries out the reaction tRNA(Thr) + L-threonine + ATP = L-threonyl-tRNA(Thr) + AMP + diphosphate + H(+). Functionally, catalyzes the attachment of threonine to tRNA(Thr) in a two-step reaction: L-threonine is first activated by ATP to form Thr-AMP and then transferred to the acceptor end of tRNA(Thr). The protein is Threonine--tRNA ligase of Haloarcula marismortui (strain ATCC 43049 / DSM 3752 / JCM 8966 / VKM B-1809) (Halobacterium marismortui).